Here is a 696-residue protein sequence, read N- to C-terminus: Gametogenetin-binding protein 2 (696 aa).

Position 360 is a phosphoserine (S360).

As to quaternary structure, interacts with GGN.

It localises to the cytoplasmic vesicle. Functionally, may be involved in spermatogenesis. The sequence is that of Gametogenetin-binding protein 2 (Ggnbp2) from Rattus norvegicus (Rat).